The following is a 239-amino-acid chain: tRNA (guanine-N(1)-)-methyltransferase (239 aa).

Residues G108 and 127–132 (LGDFVL) each bind S-adenosyl-L-methionine.

The protein belongs to the RNA methyltransferase TrmD family. Homodimer.

The protein localises to the cytoplasm. It carries out the reaction guanosine(37) in tRNA + S-adenosyl-L-methionine = N(1)-methylguanosine(37) in tRNA + S-adenosyl-L-homocysteine + H(+). In terms of biological role, specifically methylates guanosine-37 in various tRNAs. This chain is tRNA (guanine-N(1)-)-methyltransferase, found in Streptococcus thermophilus (strain CNRZ 1066).